The primary structure comprises 656 residues: L-type lectin-domain containing receptor kinase S.1 (656 aa).

Positions 1 to 29 (MSWQWRRRQWPSPLLLILIVLHLVSSSSA) are cleaved as a signal peptide. Residues 30 to 273 (IDFLYNSFSS…ARRILAWSLS (244 aa)) are legume-lectin like. Topologically, residues 30–304 (IDFLYNSFSS…SSSLSTGAIA (275 aa)) are extracellular. Residues asparagine 42, asparagine 63, asparagine 121, asparagine 139, asparagine 191, asparagine 219, asparagine 282, and asparagine 293 are each glycosylated (N-linked (GlcNAc...) asparagine). The helical transmembrane segment at 305-325 (GIVIGCVVFVALIGFGGYLIW) threads the bilayer. Residues 326–656 (KKLMREEEEE…AAADSTAAHA (331 aa)) are Cytoplasmic-facing. The region spanning 361–639 (FSNDRLLGSG…LLGSPQEDLL (279 aa)) is the Protein kinase domain. Residues 367–375 (LGSGGFGKV) and lysine 389 each bind ATP. Catalysis depends on aspartate 485, which acts as the Proton acceptor.

The protein in the C-terminal section; belongs to the protein kinase superfamily. Ser/Thr protein kinase family. This sequence in the N-terminal section; belongs to the leguminous lectin family.

It is found in the cell membrane. It carries out the reaction L-seryl-[protein] + ATP = O-phospho-L-seryl-[protein] + ADP + H(+). It catalyses the reaction L-threonyl-[protein] + ATP = O-phospho-L-threonyl-[protein] + ADP + H(+). In terms of biological role, involved in resistance response to the pathogenic oomycetes Phytophthora infestans and Phytophthora capsici and to the pathogenic bacteria Pseudomonas syringae. This chain is L-type lectin-domain containing receptor kinase S.1, found in Arabidopsis thaliana (Mouse-ear cress).